Here is a 434-residue protein sequence, read N- to C-terminus: Tol-Pal system protein TolB (434 aa).

The signal sequence occupies residues 1–21 (MIVRRALALAALALAASPALA). The tract at residues 411–434 (GDRQTPVTSGKTDLAAPAWGPLAP) is disordered.

Belongs to the TolB family. As to quaternary structure, the Tol-Pal system is composed of five core proteins: the inner membrane proteins TolA, TolQ and TolR, the periplasmic protein TolB and the outer membrane protein Pal. They form a network linking the inner and outer membranes and the peptidoglycan layer.

It localises to the periplasm. Part of the Tol-Pal system, which plays a role in outer membrane invagination during cell division and is important for maintaining outer membrane integrity. In Anaeromyxobacter sp. (strain K), this protein is Tol-Pal system protein TolB.